The primary structure comprises 179 residues: MYHVVAATTNPAKIKAIQLAFEDTFGQDQCRIESVDVASGVSLQPIGNHETRTGARQRVMEARQVRPEADFWVGVEAGIEENMTFAWMTVENPQTRGESRSASLMLPETILQGIRAGRELGSEMATITGNAEVKRQGGAIGIFTDGRLSRTSVYHQALLLALVPFHNPIYQNHNNAAQK.

Residues 8 to 13 and 68 to 69 each bind substrate; these read TTNPAK and EA. Glu-68 serves as a coordination point for Mg(2+).

Belongs to the YjjX NTPase family. As to quaternary structure, homodimer. Requires Mg(2+) as cofactor. Mn(2+) serves as cofactor.

The catalysed reaction is XTP + H2O = XDP + phosphate + H(+). It catalyses the reaction ITP + H2O = IDP + phosphate + H(+). Functionally, phosphatase that hydrolyzes non-canonical purine nucleotides such as XTP and ITP to their respective diphosphate derivatives. Probably excludes non-canonical purines from DNA/RNA precursor pool, thus preventing their incorporation into DNA/RNA and avoiding chromosomal lesions. The protein is Inosine/xanthosine triphosphatase of Serratia proteamaculans (strain 568).